Here is a 358-residue protein sequence, read N- to C-terminus: Protein Wnt-8 (358 aa).

Positions 1 to 22 (MQNTTLFILATLLIFCPFFTAS) are cleaved as a signal peptide. Cysteines 55 and 66 form a disulfide. N-linked (GlcNAc...) asparagine glycosylation is present at Asn-104. Cystine bridges form between Cys-105/Cys-113, Cys-115/Cys-133, Cys-181/Cys-195, Cys-183/Cys-190, Cys-260/Cys-298, Cys-276/Cys-291, Cys-295/Cys-337, Cys-313/Cys-328, Cys-315/Cys-325, and Cys-320/Cys-321. Ser-187 is lipidated: O-palmitoleoyl serine. N-linked (GlcNAc...) asparagine glycans are attached at residues Asn-263 and Asn-282.

The protein belongs to the Wnt family. Homooligomer; disulfide-linked, leading to inactivation. Interacts with the long chain of cer1. Post-translationally, palmitoleoylation is required for efficient binding to frizzled receptors. Depalmitoleoylation leads to Wnt signaling pathway inhibition. Proteolytic processing by tiki1 and tiki2 promotes oxidation and formation of large disulfide-bond oligomers, leading to inactivation of wnt8.

It localises to the secreted. The protein resides in the extracellular space. Its subcellular location is the extracellular matrix. In terms of biological role, ligand for members of the frizzled family of seven transmembrane receptors. Plays a role in ventral mesodermal patterning during embryogenesis. Mimics Nieuwkoop center activity. Causes dorsal mesodermal differentiation of animal cap ectoderm when coexpressed with noggin and nuclear, sequence-specific DNA-binding protein xBra. None of these molecules causes dorsal mesoderm formation when expressed alone. The sequence is that of Protein Wnt-8 (wnt8) from Xenopus laevis (African clawed frog).